The chain runs to 750 residues: Cellulose synthase-like protein H1 (750 aa).

The next 2 helical transmembrane spans lie at 27–47 and 52–72; these read LAIL…DSGA and AALA…NAKW. Residues Asp137 and Asp459 contribute to the active site. Transmembrane regions (helical) follow at residues 537-557, 570-590, 608-628, 664-684, 697-717, and 727-747; these read VWPV…YCLL, GFYI…MEFI, ITSA…TLGF, VFIP…VGAW, GPGI…MPLL, and GIPW…LLFC.

Belongs to the glycosyltransferase 2 family. Plant cellulose synthase-like H subfamily.

The protein resides in the golgi apparatus membrane. Thought to be a Golgi-localized beta-glycan synthase that polymerize the backbones of noncellulosic polysaccharides (hemicelluloses) of plant cell wall. In Oryza sativa subsp. japonica (Rice), this protein is Cellulose synthase-like protein H1 (CSLH1).